Reading from the N-terminus, the 315-residue chain is MEKFRAVLDLHVKHHSALGYGLVTLLTAGGERIFSAVAFQCPCSAAWNLPYGLVFLLVPALALFLLGYVLSARTWRLLTGCCSSARASCGSALRGSLVCTQISAAAALAPLTWVAVALLGGAFYECAATGSAAFAQRLCLGRNRSCAAELPLVPCNQAKASDVQDLLKDLKAQSQVLGWILIAVVIIILLIFTSVTRCLSPVSFLQLKFWKIYLEQEQQILKSKATEHATELAKENIKCFFEGSHPKEYNTPSMKEWQQISSLYTFNPKGQYYSMLHKYVNRKEKTHSIRSTEGDTVIPVLGFVDSSGINSTPEL.

The Cytoplasmic segment spans residues Met-1–Gly-21. Residues Leu-22–Val-37 traverse the membrane as a helical segment. At Ala-38 to Ala-46 the chain is on the extracellular side. Cystine bridges form between Cys-41–Cys-126, Cys-43–Cys-155, and Cys-139–Cys-146. The chain crosses the membrane as a helical span at residues Trp-47 to Tyr-68. Over Val-69 to Ile-102 the chain is Cytoplasmic. Residues Ser-103 to Ala-127 form a helical membrane-spanning segment. The Extracellular segment spans residues Ala-128–Asp-169. A helical transmembrane segment spans residues Leu-170–Phe-192. Over Thr-193 to Leu-315 the chain is Cytoplasmic.

Belongs to the CALHM family. In terms of assembly, oligomerizes to form decameric and undecameric channels. In terms of processing, N-glycosylated. In terms of tissue distribution, placenta.

It is found in the cell membrane. The enzyme catalyses ATP(in) = ATP(out). Functionally, pore-forming subunit of an ATP-permeable channel. In response to pathogen-derived and proinflammatory stimuli, relocates from intracellular compartments to NK-dendritic cell and NK-macrophage immune synapses where it mediates ATP efflux and NK cell activation involved in antimicrobial and antitumor responses. May assemble to form gap junction channel-like structures with gating and ion conductance likely regulated by membrane lipids and voltage rather than by extracellular calcium levels. This chain is Calcium homeostasis modulator protein 6, found in Homo sapiens (Human).